We begin with the raw amino-acid sequence, 351 residues long: Protein-glutamate methylesterase/protein-glutamine glutaminase 2 (351 aa).

Residues 4 to 121 form the Response regulatory domain; the sequence is KVLVVDDSAL…PQDFNEYQDL (118 aa). Asp55 is modified (4-aspartylphosphate). Positions 156–348 constitute a CheB-type methylesterase domain; it reads RVINTQLVAI…DKMLNYLASL (193 aa). Active-site residues include Ser168, His194, and Asp290.

This sequence belongs to the CheB family. In terms of processing, phosphorylated by CheA. Phosphorylation of the N-terminal regulatory domain activates the methylesterase activity.

The protein localises to the cytoplasm. The catalysed reaction is [protein]-L-glutamate 5-O-methyl ester + H2O = L-glutamyl-[protein] + methanol + H(+). The enzyme catalyses L-glutaminyl-[protein] + H2O = L-glutamyl-[protein] + NH4(+). Involved in chemotaxis. Part of a chemotaxis signal transduction system that modulates chemotaxis in response to various stimuli. Catalyzes the demethylation of specific methylglutamate residues introduced into the chemoreceptors (methyl-accepting chemotaxis proteins or MCP) by CheR. Also mediates the irreversible deamidation of specific glutamine residues to glutamic acid. This Shewanella sp. (strain MR-7) protein is Protein-glutamate methylesterase/protein-glutamine glutaminase 2.